We begin with the raw amino-acid sequence, 64 residues long: UPF0434 protein MADE_1009415 (64 aa).

It belongs to the UPF0434 family.

The sequence is that of UPF0434 protein MADE_1009415 from Alteromonas mediterranea (strain DSM 17117 / CIP 110805 / LMG 28347 / Deep ecotype).